Here is a 1273-residue protein sequence, read N- to C-terminus: Inverted formin-2 (1273 aa).

Disordered stretches follow at residues 1 to 30 (MSVK…EANL), 346 to 387 (GRPR…GQQP), 427 to 559 (LSSS…PLPG), 960 to 999 (NKDR…GPGK), and 1021 to 1273 (KTAR…CVIQ). S2 is subject to N-acetylserine. A GBD/FH3 domain is found at 2–330 (SVKEGAQRKW…RAVLLASDAQ (329 aa)). S351 is modified (phosphoserine). Low complexity predominate over residues 359-382 (SVQTNSVQNQGSSSQNTTTPTTKV). In terms of domain architecture, FH1 spans 421 to 564 (PLPTPPLSSS…PPLPGFSVPS (144 aa)). 2 stretches are compositionally biased toward pro residues: residues 433-516 (VLPP…PLPS) and 524-558 (QPPP…PPLP). The region spanning 589 to 979 (HRRVNPPTLR…AERRKQQLAE (391 aa)) is the FH2 domain. Residues 907-984 (EASQELDKVF…QQLAEEEARR (78 aa)) adopt a coiled-coil conformation. Positions 1007-1022 (DALLADIRKGFQLRKT) constitute a WH2 domain. Polar residues predominate over residues 1047-1059 (ATASNPTQGTNHP). A compositionally biased stretch (basic and acidic residues) spans 1088-1101 (SKEEDGPPALERRS). A phosphoserine mark is found at S1172 and S1174. A compositionally biased stretch (acidic residues) spans 1195–1204 (GEDEDGEDTA). T1203 bears the Phosphothreonine mark. 2 positions are modified to phosphoserine: S1216 and S1218. Phosphothreonine occurs at positions 1223 and 1230. Basic residues predominate over residues 1242–1251 (TSKRRKKRPS).

Belongs to the formin homology family. Interacts with profilin and actin at the FH1 and FH2 domains respectively. Interacts with DAAM2.

The protein resides in the cytoplasm. It is found in the perinuclear region. Its activity is regulated as follows. Phosphate inhibits both the depolymerization and severing activities. Functionally, severs actin filaments and accelerates their polymerization and depolymerization. The chain is Inverted formin-2 (Inf2) from Mus musculus (Mouse).